The sequence spans 709 residues: Elongation factor G (709 aa).

Residues 10–295 (NQVRNIGIMA…AVVDYLPSPE (286 aa)) enclose the tr-type G domain. Residues 19 to 26 (AHIDAGKT), 91 to 95 (DTPGH), and 145 to 148 (NKMD) each bind GTP.

This sequence belongs to the TRAFAC class translation factor GTPase superfamily. Classic translation factor GTPase family. EF-G/EF-2 subfamily.

The protein resides in the cytoplasm. In terms of biological role, catalyzes the GTP-dependent ribosomal translocation step during translation elongation. During this step, the ribosome changes from the pre-translocational (PRE) to the post-translocational (POST) state as the newly formed A-site-bound peptidyl-tRNA and P-site-bound deacylated tRNA move to the P and E sites, respectively. Catalyzes the coordinated movement of the two tRNA molecules, the mRNA and conformational changes in the ribosome. This is Elongation factor G from Bifidobacterium animalis subsp. lactis (strain AD011).